The chain runs to 212 residues: Ependymin (212 aa).

The N-terminal stretch at 1–20 (MRLTGLLCVALWSASAVVLA) is a signal peptide. N-linked (GlcNAc...) asparagine glycosylation is found at Asn-69, Asn-92, and Asn-112.

It belongs to the ependymin family. As to quaternary structure, forms disulfide-linked dimers. In terms of processing, binds calcium through the terminal sialic acids. As to expression, EPDs are synthesized in the meninx and secreted in the cerebrospinal fluid.

The protein resides in the secreted. Its function is as follows. May play a role in neural plasticity. May be involved during axon regeneration. The chain is Ependymin (epd) from Clupea harengus (Atlantic herring).